We begin with the raw amino-acid sequence, 390 residues long: Guanine nucleotide-binding protein alpha-7 subunit (390 aa).

Low complexity-rich tracts occupy residues 1-12 (MSSTTTNTTTAT) and 22-42 (SSSP…MSPS). A disordered region spans residues 1-42 (MSSTTTNTTTATPAIQVNGNQSSSPQSPSSSTSTLSPPMSPS). Residues 70–390 (SELKLLLLGT…TRQTMEEGGI (321 aa)) form the G-alpha domain. The tract at residues 73–86 (KLLLLGTGDSGKST) is G1 motif. GTP contacts are provided by residues 78–85 (GTGDSGKS), 213–219 (LYTRVAS), 238–242 (DVAGQ), 307–310 (NKRD), and alanine 363. A Mg(2+)-binding site is contributed by serine 85. The tract at residues 211-219 (DILYTRVAS) is G2 motif. The tract at residues 234 to 243 (FRMIDVAGQR) is G3 motif. The interval 303-310 (ILFLNKRD) is G4 motif. Residues 361-366 (TTATDT) are G5 motif.

Belongs to the G-alpha family. In terms of assembly, g proteins are composed of 3 units; alpha, beta and gamma. The alpha chain contains the guanine nucleotide binding site.

Guanine nucleotide-binding proteins (G proteins) are involved as modulators or transducers in various transmembrane signaling systems. In Dictyostelium discoideum (Social amoeba), this protein is Guanine nucleotide-binding protein alpha-7 subunit (gpaG).